We begin with the raw amino-acid sequence, 418 residues long: Argininosuccinate synthase (418 aa).

ATP contacts are provided by residues 14 to 22 and Ala42; that span reads AYSGGLDTS. 2 residues coordinate L-citrulline: Tyr94 and Ser99. Gly124 is an ATP binding site. 3 residues coordinate L-aspartate: Thr126, Asn130, and Asp131. Position 130 (Asn130) interacts with L-citrulline. Residues Arg134, Ser183, Ser192, Glu273, and Tyr285 each coordinate L-citrulline.

It belongs to the argininosuccinate synthase family. Type 1 subfamily. In terms of assembly, homotetramer.

It localises to the cytoplasm. The enzyme catalyses L-citrulline + L-aspartate + ATP = 2-(N(omega)-L-arginino)succinate + AMP + diphosphate + H(+). It participates in amino-acid biosynthesis; L-arginine biosynthesis; L-arginine from L-ornithine and carbamoyl phosphate: step 2/3. The sequence is that of Argininosuccinate synthase from Colwellia psychrerythraea (strain 34H / ATCC BAA-681) (Vibrio psychroerythus).